Consider the following 343-residue polypeptide: Protein RecA (343 aa).

65-72 contacts ATP; the sequence is GPESSGKT.

The protein belongs to the RecA family.

It is found in the cytoplasm. Can catalyze the hydrolysis of ATP in the presence of single-stranded DNA, the ATP-dependent uptake of single-stranded DNA by duplex DNA, and the ATP-dependent hybridization of homologous single-stranded DNAs. It interacts with LexA causing its activation and leading to its autocatalytic cleavage. This Pseudoalteromonas atlantica (strain T6c / ATCC BAA-1087) protein is Protein RecA.